The sequence spans 342 residues: S-adenosylmethionine:tRNA ribosyltransferase-isomerase (342 aa).

Belongs to the QueA family. In terms of assembly, monomer.

The protein localises to the cytoplasm. The enzyme catalyses 7-aminomethyl-7-carbaguanosine(34) in tRNA + S-adenosyl-L-methionine = epoxyqueuosine(34) in tRNA + adenine + L-methionine + 2 H(+). It functions in the pathway tRNA modification; tRNA-queuosine biosynthesis. In terms of biological role, transfers and isomerizes the ribose moiety from AdoMet to the 7-aminomethyl group of 7-deazaguanine (preQ1-tRNA) to give epoxyqueuosine (oQ-tRNA). This chain is S-adenosylmethionine:tRNA ribosyltransferase-isomerase, found in Streptococcus agalactiae serotype III (strain NEM316).